A 327-amino-acid polypeptide reads, in one-letter code: DNA-directed RNA polymerase subunit alpha (327 aa).

Residues M1–Q233 form an alpha N-terminal domain (alpha-NTD) region. An alpha C-terminal domain (alpha-CTD) region spans residues I247–P327.

It belongs to the RNA polymerase alpha chain family. As to quaternary structure, homodimer. The RNAP catalytic core consists of 2 alpha, 1 beta, 1 beta' and 1 omega subunit. When a sigma factor is associated with the core the holoenzyme is formed, which can initiate transcription.

It catalyses the reaction RNA(n) + a ribonucleoside 5'-triphosphate = RNA(n+1) + diphosphate. Its function is as follows. DNA-dependent RNA polymerase catalyzes the transcription of DNA into RNA using the four ribonucleoside triphosphates as substrates. The protein is DNA-directed RNA polymerase subunit alpha of Chromobacterium violaceum (strain ATCC 12472 / DSM 30191 / JCM 1249 / CCUG 213 / NBRC 12614 / NCIMB 9131 / NCTC 9757 / MK).